A 370-amino-acid chain; its full sequence is tRNA-specific 2-thiouridylase MnmA (370 aa).

Residues 9-16 (GLSGGVDS) and Met35 contribute to the ATP site. Positions 95-97 (NPD) are interaction with target base in tRNA. The Nucleophile role is filled by Cys100. An intrachain disulfide couples Cys100 to Cys198. Gly124 serves as a coordination point for ATP. Positions 148-150 (KDQ) are interaction with tRNA. Cys198 functions as the Cysteine persulfide intermediate in the catalytic mechanism. The interval 316–317 (RY) is interaction with tRNA.

It belongs to the MnmA/TRMU family.

It localises to the cytoplasm. The enzyme catalyses S-sulfanyl-L-cysteinyl-[protein] + uridine(34) in tRNA + AH2 + ATP = 2-thiouridine(34) in tRNA + L-cysteinyl-[protein] + A + AMP + diphosphate + H(+). Catalyzes the 2-thiolation of uridine at the wobble position (U34) of tRNA, leading to the formation of s(2)U34. The polypeptide is tRNA-specific 2-thiouridylase MnmA (Acidovorax ebreus (strain TPSY) (Diaphorobacter sp. (strain TPSY))).